The primary structure comprises 373 residues: Probable G-protein coupled receptor 173 (373 aa).

Residues 1–26 (MANTTGEPEEVSGALSLPSASAYVKL) lie on the Extracellular side of the membrane. The N-linked (GlcNAc...) asparagine glycan is linked to Asn3. The helical transmembrane segment at 27–47 (VLLGLIMCVSLAGNAILSLLV) threads the bilayer. Residues 48–59 (LKERALHKAPYY) are Cytoplasmic-facing. The chain crosses the membrane as a helical span at residues 60-80 (FLLDLCLADGIRSAICFPFVL). Over 81-97 (ASVRHGSSWTFSALSCK) the chain is Extracellular. A disulfide bridge connects residues Cys96 and Cys174. The helical transmembrane segment at 98 to 118 (IVAFMAVLFCFHAAFMLFCIS) threads the bilayer. Residues 119 to 139 (VTRYMAIAHHRFYAKRMTLWT) lie on the Cytoplasmic side of the membrane. A helical membrane pass occupies residues 140–160 (CAAVICMAWTLSVAMAFPPVF). The Extracellular portion of the chain corresponds to 161–188 (DVGTYKFIREEDQCIFEHRYFKANDTLG). Asn184 carries N-linked (GlcNAc...) asparagine glycosylation. Residues 189 to 209 (FMLMLAVLMAATHAVYGKLLL) form a helical membrane-spanning segment. The Cytoplasmic portion of the chain corresponds to 210 to 287 (FEYRHRKMKP…VKGEKQLGRM (78 aa)). A helical membrane pass occupies residues 288-308 (FYAITLLFLLLWSPYIVACYW). The Extracellular portion of the chain corresponds to 309–322 (RVFVKACAVPHRYL). The helical transmembrane segment at 323–343 (ATAVWMSFAQAAVNPIVCFLL) threads the bilayer. Residues 344–373 (NKDLKKCLRTHAPCWGTGGAPAPREPYCVM) lie on the Cytoplasmic side of the membrane.

It belongs to the G-protein coupled receptor 1 family. In terms of tissue distribution, expressed in the ovary, specifically in granulosa cells of follicles that have passed the primary stage and in oocytes (at protein level). Expressed in preadipocytes.

Its subcellular location is the cell membrane. Is a receptor for the SMIM20 derived peptides Phoenixin-14 and Phoenixin-20. It mediates the Phoenixin-14 and Phoenixin-20 augmentation of gonadotropin-releasing hormone (GNRH) signaling in the hypothalamus and pituitary gland. In the ovary, it mediates the effects of Phoenixin-14 and Phoenixin-20 induced granulosa cell proliferation during follicular growth. This is Probable G-protein coupled receptor 173 (Gpr173) from Mus musculus (Mouse).